The sequence spans 37 residues: MEVNILAFIATALFILVPTAFLLIIYVKTVGQSDSFE.

Residues 5 to 25 form a helical membrane-spanning segment; sequence ILAFIATALFILVPTAFLLII.

This sequence belongs to the PsbM family. In terms of assembly, PSII is composed of 1 copy each of membrane proteins PsbA, PsbB, PsbC, PsbD, PsbE, PsbF, PsbH, PsbI, PsbJ, PsbK, PsbL, PsbM, PsbT, PsbX, PsbY, PsbZ, Psb30/Ycf12, at least 3 peripheral proteins of the oxygen-evolving complex and a large number of cofactors. It forms dimeric complexes.

It is found in the plastid. Its subcellular location is the chloroplast thylakoid membrane. Its function is as follows. One of the components of the core complex of photosystem II (PSII). PSII is a light-driven water:plastoquinone oxidoreductase that uses light energy to abstract electrons from H(2)O, generating O(2) and a proton gradient subsequently used for ATP formation. It consists of a core antenna complex that captures photons, and an electron transfer chain that converts photonic excitation into a charge separation. This subunit is found at the monomer-monomer interface. This Pelargonium hortorum (Common geranium) protein is Photosystem II reaction center protein M.